The primary structure comprises 1995 residues: MDIESDHEPKESSVDLEGRHDSIRKSFEADDIDVTDENTIFSTSRKEQSTIEPMDSFVENNIANSSSQQSVSEIDIQLPSSEPKEGVKEESNLIESNSLDNVQEINPQNTIGDKSAHTEEESSNDNLVKITAGTIISDIMDEPVVDEDDKLSEEDLSKEDLETTLKGDENYSSSQKEIYDNDETIPKPPSPEVEKIETSTSVENAYITNSQYNDTLDMEDQTSDLITTFEHENEDHEVHEVPSIHGMEGTFETVNLTSEAGNEKEFNNDSVVLNTTPKEMQISSLDAVDKLEDKPVSNDNIKANIESSTTVDRASSQLESENNESTFFVHNQNSSGQHQTLDFVASKPVTDTPELSKENTLVSSENLNDPKPNLPETEVDFGEPLEVEAPSFVVQNNSAVQPTTQKTSEDSTDLHTNEIPNVAQPPSSFEKENNKDTSKLENPDISSSPLSPTEDLFPNDPEEENLFSAALGLNSNTGSQPSETQSKPSIDPSESITVTDNQDSLLFSQLTNNALQAENATKVSENTINDEELIDDSEFTSLMSNFLESSTVQTNKYLPKSSASPPANAPIVSSDVHKNENAGTARRAPQSGAFVASKAKYSSPYDLPEEIVQVAQQKRSVSQNYNRQYSFQPRPATPSNPPRSLPPPSGQVNAPMSQTPNPISFAYQHGTPLATPTMRANSFNSYPASSAEPIRRPATTTVGHTPNLYSPKTNTYNSRHMAYEMTKSHINVISPGPSLQVNAPYTPTSGELGNKVSNPTKEFVSTSSYAPAANTRNAIIREPGILSPLSPRVQPVLSRRESIISMGSSASSYVPLEIAPRPMSSLEHTMNSAMSPGNLQRTANLYKPMTTPNAYNIKNSNQRETKYPYQPQAINYSEVTQPGSSSLPTSGEEANIIRSPGFTPLAAQKDATIYTPSHAQATLYGNMDNNDRDNEGIHDILQSDMEPVLPPHNSAYHANAPVSSHSEGLNNRLPISPLPPQLHKTGTPSHQHGFDTAETTAKQYAPSIPPNFNPNVSIDTMTEGVALPSATLDSDKSSLHKRSAELSRNNSPRPDFLPLPNQPLLHSNLHSPVSPVVDSNEDSRLKFLSTQRPAFSFGPCGTIVMAFSTPSGLYTTSGKGTKFIAGPIKIEKLGDVLTDEYRHLKEFKGPYLASNGKVDKHGKAEAIEWLSKYIDRLNQSLEYDDKNITLKDKLLLLQCLKMLLEVSDRKLIVEKLRPILLPSFEIPEPCNTATSVQELINPEINQDDSPIVASRYCTTSFLHRFYEYLLSGNKDEALTYALQQKQWPYAIIVAHSIDAKTFQGVVRTFCKSEVKESMLRSGVGVNLQLSLQLMSDAHASSMSEFSSSTSLLNLADQSQASNALVAWKELLYNIIANHYSDQKEALRVLGTLLLQENRVYAAHLVYILSLSPDVCSNKSNSLFELVGLSKHNLYPSHDDLFDVTQLTEVLELVFNVYSEKTPVFFTHLVPYRLYEAEVLAEAGEVSAARKYCELIGNYLNRVAKKSNNVDPGFVLRVRDLTQQILENSAGSEDISSSWLGRTVSRPRLDTVLSSLGSKFSKFVAGDPNFDVMRPATVGPGPFGKVASQKNLTVQTNTNNAAMESFYSDRPTSSGPSYQNRTPLTGQESMNMGVYSPYRRSTEIAENMSMDGNAYPYTPASQENPYTPRHSQEDNASVLSQQPLTFYSNVADNSYMPVSASQEPKMGMGTAFNMPTNEVHGVGAEMASPYQPLQPASAHLPNLQPTLAPINQNAYVPSNIAPAMGAMQSAPSAEAVAAPSESLNLNKDRSQQAKQAAAQNVADLVRQEEEKEKQKQKAKKNAESGKKGGAKGWFSKLLRRDESKDQPTVYKAKLGEKSHLHYDKELKRWVNDDGSDLSNQAAPPPPPPMALPKAGPPSAAPTSALPPAGPPAGATAISGNPGMPAPVPLTGKETAVPLSSMPNAPPSVASNAKLPPASNNRKVDPLEDILQAMPPPTTRKARGKTSKRYVDVMRNS.

Positions 1–28 are enriched in basic and acidic residues; sequence MDIESDHEPKESSVDLEGRHDSIRKSFE. 7 disordered regions span residues 1-32, 61-127, 140-198, 349-378, 392-496, 557-594, and 629-661; these read MDIE…ADDI, NIAN…NDNL, MDEP…KIET, VTDT…PETE, FVVQ…SESI, YLPK…SGAF, and YSFQ…QTPN. Polar residues predominate over residues 61–72; that stretch reads NIANSSSQQSVS. The segment covering 82–91 has biased composition (basic and acidic residues); sequence EPKEGVKEES. Polar residues predominate over residues 93–112; it reads LIESNSLDNVQEINPQNTIG. Positions 140 to 152 are enriched in acidic residues; the sequence is MDEPVVDEDDKLS. Positions 153–169 are enriched in basic and acidic residues; the sequence is EEDLSKEDLETTLKGDE. Composition is skewed to polar residues over residues 358–367 and 393–406; these read ENTLVSSENL and VVQN…TTQK. Composition is skewed to basic and acidic residues over residues 407–416 and 429–442; these read TSEDSTDLHT and FEKE…KLEN. Polar residues predominate over residues 473-496; the sequence is LNSNTGSQPSETQSKPSIDPSESI. Positions 561–574 are enriched in low complexity; sequence SSASPPANAPIVSS. Over residues 635-649 the composition is skewed to pro residues; that stretch reads PATPSNPPRSLPPPS. The segment covering 650–661 has biased composition (polar residues); it reads GQVNAPMSQTPN. Position 790 is a phosphoserine (S790). Disordered stretches follow at residues 945-994, 1029-1063, 1605-1631, 1649-1675, and 1777-1995; these read MEPV…QHGF, SATL…PNQP, FYSD…SMNM, MDGN…EDNA, and APSE…MRNS. Positions 1033 to 1045 are enriched in basic and acidic residues; that stretch reads DSDKSSLHKRSAE. Residues 1609 to 1629 are compositionally biased toward polar residues; the sequence is RPTSSGPSYQNRTPLTGQESM. 2 stretches are compositionally biased toward basic and acidic residues: residues 1804-1825 and 1852-1870; these read VRQE…ESGK and KLGE…RWVN. The span at 1881 to 1898 shows a compositional bias: pro residues; that stretch reads APPPPPPMALPKAGPPSA. Residues 1899-1915 are compositionally biased toward low complexity; it reads APTSALPPAGPPAGATA.

Belongs to the SEC16 family. As to quaternary structure, interacts with dil1.

The protein resides in the endoplasmic reticulum membrane. Its function is as follows. Involved in the initiation of assembly of the COPII coat required for the formation of transport vesicles from the endoplasmic reticulum (ER) and the selection of cargo molecules. Also involved in autophagy. This is COPII coat assembly protein sec16 (sec16) from Schizosaccharomyces pombe (strain 972 / ATCC 24843) (Fission yeast).